The chain runs to 515 residues: Bifunctional purine biosynthesis protein PurH (515 aa).

The region spanning 1–145 (MTKRVLISVS…KNHASVTVVV (145 aa)) is the MGS-like domain.

The protein belongs to the PurH family.

The catalysed reaction is (6R)-10-formyltetrahydrofolate + 5-amino-1-(5-phospho-beta-D-ribosyl)imidazole-4-carboxamide = 5-formamido-1-(5-phospho-D-ribosyl)imidazole-4-carboxamide + (6S)-5,6,7,8-tetrahydrofolate. It carries out the reaction IMP + H2O = 5-formamido-1-(5-phospho-D-ribosyl)imidazole-4-carboxamide. Its pathway is purine metabolism; IMP biosynthesis via de novo pathway; 5-formamido-1-(5-phospho-D-ribosyl)imidazole-4-carboxamide from 5-amino-1-(5-phospho-D-ribosyl)imidazole-4-carboxamide (10-formyl THF route): step 1/1. It participates in purine metabolism; IMP biosynthesis via de novo pathway; IMP from 5-formamido-1-(5-phospho-D-ribosyl)imidazole-4-carboxamide: step 1/1. In Streptococcus pneumoniae (strain JJA), this protein is Bifunctional purine biosynthesis protein PurH.